The sequence spans 283 residues: Large ribosomal subunit protein uL2 (283 aa).

Disordered stretches follow at residues 37 to 59 (AKKK…RGGG) and 219 to 283 (HKGI…RNSK). The span at 256 to 269 (WGKRHMGVKTRNNK) shows a compositional bias: basic residues.

The protein belongs to the universal ribosomal protein uL2 family. Part of the 50S ribosomal subunit. Forms a bridge to the 30S subunit in the 70S ribosome.

Functionally, one of the primary rRNA binding proteins. Required for association of the 30S and 50S subunits to form the 70S ribosome, for tRNA binding and peptide bond formation. It has been suggested to have peptidyltransferase activity; this is somewhat controversial. Makes several contacts with the 16S rRNA in the 70S ribosome. This Mycoplasmoides gallisepticum (strain R(low / passage 15 / clone 2)) (Mycoplasma gallisepticum) protein is Large ribosomal subunit protein uL2.